The chain runs to 891 residues: Targeting protein for Xklp2 homolog (891 aa).

Basic and acidic residues predominate over residues 42 to 54; the sequence is HENGVPLTFDDKA. 5 disordered regions span residues 42–310, 418–454, 472–518, 723–746, and 789–891; these read HENG…KSCP, NLRK…SFSG, HTKT…NRHR, CSGV…AEKG, and STKP…SHTS. The span at 108 to 124 shows a compositional bias: polar residues; the sequence is DDVSSAESETCEMSTDS. The span at 141-154 shows a compositional bias: acidic residues; sequence DDEATVQESSDAEE. The segment covering 155 to 173 has biased composition (polar residues); the sequence is TQTLPSSCVDSSTAEMSTD. A compositionally biased stretch (basic residues) spans 236-246; sequence PTRKSPRLHSR. Residues 442-454 show a composition bias toward basic and acidic residues; the sequence is DNRKRTHEESFSG. The segment covering 791–802 has biased composition (polar residues); the sequence is KPMTDISNFSLN. Basic and acidic residues-rich tracts occupy residues 803–822 and 831–852; these read TERR…ERQL and REAE…DSIH.

This sequence belongs to the TPX2 family. In terms of tissue distribution, detectable in immature oocytes.

The protein resides in the nucleus. It is found in the cytoplasm. The protein localises to the cytoskeleton. Its subcellular location is the spindle. In terms of biological role, spindle assembly factor. Required for normal assembly of mitotic spindles. This chain is Targeting protein for Xklp2 homolog, found in Patiria pectinifera (Starfish).